Here is a 225-residue protein sequence, read N- to C-terminus: Membrane protein (225 aa).

Residues 1-20 (MPNETNCTLDFEQSVQLFKE) are Virion surface-facing. Residues 21 to 41 (YNLFITAFLLFLTIILQYGYA) form a helical membrane-spanning segment. The Intravirion portion of the chain corresponds to 42–51 (TRTKVIYTLK). The chain crosses the membrane as a helical span at residues 52–72 (MIVLWCFWPLNIAVGVISCTY). The Virion surface portion of the chain corresponds to 73–77 (PPNTG). The chain crosses the membrane as a helical span at residues 78-98 (GLVVAIILTVFACLSFVGYWI). Residues 99–225 (QSIRLFKRCR…VATGGSSLYT (127 aa)) lie on the Intravirion side of the membrane.

Belongs to the gammacoronaviruses M protein family. Homomultimer. Interacts with envelope E protein in the budding compartment of the host cell, which is located between endoplasmic reticulum and the Golgi complex. Forms a complex with HE and S proteins. Interacts with nucleocapsid N protein. This interaction probably participates in RNA packaging into the virus.

It localises to the virion membrane. The protein resides in the host Golgi apparatus membrane. Its function is as follows. Component of the viral envelope that plays a central role in virus morphogenesis and assembly via its interactions with other viral proteins. This chain is Membrane protein, found in Avian infectious bronchitis virus (strain Beaudette US) (IBV).